Consider the following 713-residue polypeptide: Zinc finger and BTB domain-containing protein 1 (713 aa).

K3 participates in a covalent cross-link: Glycyl lysine isopeptide (Lys-Gly) (interchain with G-Cter in SUMO2). Positions 24-91 (CDCCIAIDDI…MYLGKIMTAP (68 aa)) constitute a BTB domain. Glycyl lysine isopeptide (Lys-Gly) (interchain with G-Cter in SUMO2) cross-links involve residues K200 and K205. A C2H2-type 1; atypical zinc finger spans residues 216–242 (FTCDSCGFGFSCEKLLDEHVLTCTNRH). Residues K261, K266, K276, K284, K304, K316, K328, K340, and K346 each participate in a glycyl lysine isopeptide (Lys-Gly) (interchain with G-Cter in SUMO2) cross-link. Positions 270 to 319 (AEKDSSKTFSAQPDKYREDANQAPDDSASTTGSRKSTVEAGIAGEEKSRA) are disordered. At S355 the chain carries Phosphoserine. At T356 the chain carries Phosphothreonine. K381 participates in a covalent cross-link: Glycyl lysine isopeptide (Lys-Gly) (interchain with G-Cter in SUMO2). The C2H2-type 2; atypical zinc finger occupies 448–470 (CACGKCGQILVKGRQLQEHAQRC). K528 participates in a covalent cross-link: Glycyl lysine isopeptide (Lys-Gly) (interchain with G-Cter in SUMO2). Residues 533-558 (PFRCPNCGQRFETENLVVEHMSSCLD) form a UBZ-type zinc finger. K563 participates in a covalent cross-link: Glycyl lysine isopeptide (Lys-Gly) (interchain with G-Cter in SUMO2). 5 consecutive C2H2-type zinc fingers follow at residues 578–600 (HFCN…YTVH), 606–628 (FVCQ…NDMH), 634–656 (YVCS…MISH), 662–684 (TICQ…MDVH), and 686–709 (YTCG…NAKH).

Homodimer. Homodimer. Interacts (via BTB domain) with TRIM28 (unphosphorylated or phosphorylated form). Sumoylated with SUMO2 at Lys-328 and to a lesser extent at Lys-266. Sumoylation inhibits its transcriptional repression activity and regulates its subcellular localization. Expressed strongly in thymus and spleen, less in lymph nodes and peripheral blood mononuclear cells (PBMCs) and weakly in bone marrow. Strongly expressed in immature, but weakly in mature bone marrow-lymphocyte B.

The protein localises to the nucleus. It is found in the nucleoplasm. In terms of biological role, acts as a transcriptional repressor. Represses cAMP-responsive element (CRE)-mediated transcriptional activation. In addition, has a role in translesion DNA synthesis. Requires for UV-inducible RAD18 loading, PCNA monoubiquitination, POLH recruitment to replication factories and efficient translesion DNA synthesis. Plays a key role in the transcriptional regulation of T lymphocyte development. The polypeptide is Zinc finger and BTB domain-containing protein 1 (Zbtb1) (Mus musculus (Mouse)).